We begin with the raw amino-acid sequence, 393 residues long: Ig heavy chain C region (393 aa).

3 Ig-like domains span residues 63–157 (PTVI…RNIT), 168–260 (PVIK…ASIH), and 270–370 (PSVS…RTVN). 8 N-linked (GlcNAc...) asparagine glycosylation sites follow: Asn119, Asn155, Asn200, Asn230, Asn329, Asn366, Asn370, and Asn380.

The chain is Ig heavy chain C region from Heterodontus francisci (Horn shark).